The chain runs to 405 residues: Diaminopimelate decarboxylase (405 aa).

Lys-46 carries the post-translational modification N6-(pyridoxal phosphate)lysine. Residues Gly-225 and 259 to 262 (EPGR) contribute to the pyridoxal 5'-phosphate site. Residues Arg-262, Arg-298, and Tyr-302 each coordinate substrate. Catalysis depends on Cys-329, which acts as the Proton donor. 2 residues coordinate substrate: Glu-330 and Tyr-358. Residue Tyr-358 coordinates pyridoxal 5'-phosphate.

The protein belongs to the Orn/Lys/Arg decarboxylase class-II family. LysA subfamily. In terms of assembly, homodimer. Pyridoxal 5'-phosphate is required as a cofactor.

It carries out the reaction meso-2,6-diaminopimelate + H(+) = L-lysine + CO2. Its pathway is amino-acid biosynthesis; L-lysine biosynthesis via DAP pathway; L-lysine from DL-2,6-diaminopimelate: step 1/1. In terms of biological role, specifically catalyzes the decarboxylation of meso-diaminopimelate (meso-DAP) to L-lysine. The protein is Diaminopimelate decarboxylase of Helicobacter pylori (Campylobacter pylori).